A 1132-amino-acid polypeptide reads, in one-letter code: DNA-directed RNA polymerase subunit beta (1132 aa).

It belongs to the RNA polymerase beta chain family. The RNAP catalytic core consists of 2 alpha, 1 beta, 1 beta' and 1 omega subunit. When a sigma factor is associated with the core the holoenzyme is formed, which can initiate transcription.

The catalysed reaction is RNA(n) + a ribonucleoside 5'-triphosphate = RNA(n+1) + diphosphate. DNA-dependent RNA polymerase catalyzes the transcription of DNA into RNA using the four ribonucleoside triphosphates as substrates. This chain is DNA-directed RNA polymerase subunit beta, found in Carboxydothermus hydrogenoformans (strain ATCC BAA-161 / DSM 6008 / Z-2901).